Here is a 124-residue protein sequence, read N- to C-terminus: Glycine cleavage system H protein (124 aa).

Residues 19–101 form the Lipoyl-binding domain; sequence VATVGITDHA…ESGAWFFRMT (83 aa). At Lys-60 the chain carries N6-lipoyllysine.

It belongs to the GcvH family. The glycine cleavage system is composed of four proteins: P, T, L and H. The cofactor is (R)-lipoate.

In terms of biological role, the glycine cleavage system catalyzes the degradation of glycine. The H protein shuttles the methylamine group of glycine from the P protein to the T protein. This is Glycine cleavage system H protein from Acidiphilium cryptum (strain JF-5).